The primary structure comprises 109 residues: Sperm-specific class P protein 10 (109 aa).

Residues 2 to 109 form the MSP domain; the sequence is SLTADPPACT…TVTIPMSATA (108 aa).

In terms of tissue distribution, expressed at higher level in testis.

The sequence is that of Sperm-specific class P protein 10 (ssp-10) from Caenorhabditis elegans.